The chain runs to 483 residues: Isocitrate dehydrogenase [NADP] (483 aa).

Residue Thr74 coordinates NADP(+). 5 residues coordinate D-threo-isocitrate: Ser83, Asn85, Arg89, Arg99, and Arg121. Asp232 contacts Mg(2+). NADP(+)-binding positions include 264 to 270 (HGSAPDI) and Asn277.

Belongs to the isocitrate and isopropylmalate dehydrogenases family. As to quaternary structure, homodimer. Requires Mg(2+) as cofactor. The cofactor is Mn(2+).

The catalysed reaction is D-threo-isocitrate + NADP(+) = 2-oxoglutarate + CO2 + NADPH. Its function is as follows. Catalyzes the oxidative decarboxylation of isocitrate to 2-oxoglutarate and carbon dioxide with the concomitant reduction of NADP(+). The chain is Isocitrate dehydrogenase [NADP] (icd) from Rickettsia typhi (strain ATCC VR-144 / Wilmington).